Reading from the N-terminus, the 130-residue chain is Secreted RxLR effector protein 68 (130 aa).

Positions 1-29 (MRCVCASIRRTRIIEFLMFFALSSSTASC) are cleaved as a signal peptide. An N-linked (GlcNAc...) asparagine glycan is attached at Asn36. The short motif at 45–48 (RWLR) is the RxLR element.

This sequence belongs to the RxLR effector family.

The protein resides in the secreted. It localises to the host cytoplasm. The protein localises to the host nucleus. Effector that acts as a broad suppressor of cell death to interrupt plant immunity. Inhibits cell death induced by cell death-inducing proteins, including the PAMP elicitor INF1 from P.infestans. This is Secreted RxLR effector protein 68 from Plasmopara viticola (Downy mildew of grapevine).